Consider the following 408-residue polypeptide: Probable ethanolamine permease EutH (408 aa).

A run of 11 helical transmembrane segments spans residues 1-21 (MGIN…AAVD), 61-81 (AMVG…PVII), 89-109 (ANPS…FFLA), 126-146 (ILGS…LGII), 155-175 (ALGV…GGLI), 192-212 (FALI…VALG), 230-250 (FLVA…LLGW), 274-294 (IEVI…VLLL), 313-333 (NIAA…FGMM), 342-362 (VINC…LGFA), and 369-389 (MIFP…GVAM).

It belongs to the EutH family.

It is found in the cell inner membrane. It carries out the reaction ethanolamine(in) = ethanolamine(out). It functions in the pathway amine and polyamine degradation; ethanolamine degradation. Its function is as follows. Probably involved in the diffusion of protonated ethanolamine (EA) into the cell at low pH. At low pH most EA is protonated, and this permease becomes necessary. Contributes to bacterial survival and replication in acidified macrophage vacuoles, but not to bacterial uptake by macrophages. In terms of biological role, expression of the eut operon allows this bacteria to use ethanolamine (EA) as a carbon, nitrogen and energy source. It relies on cobalamin (vitamin B12) both as a cofactor for the ethanolamine ammonia-lyase (EAL) activity and to induce the operon. EA enhances bacterial survival in macrophages in a concentration-dependent manner, suggesting it is an important nutrient during infection. This Salmonella typhimurium (strain LT2 / SGSC1412 / ATCC 700720) protein is Probable ethanolamine permease EutH.